A 1207-amino-acid chain; its full sequence is Chromosomal serine/threonine-protein kinase JIL-1 (1207 aa).

The span at 1–19 shows a compositional bias: polar residues; that stretch reads MSRLQKQNYEILSGTSTSR. Disordered regions lie at residues 1–119, 164–183, and 210–230; these read MSRL…ASAR, QDME…SSSL, and SSST…LDLD. Phosphoserine occurs at positions 29 and 31. A compositionally biased stretch (polar residues) spans 45–69; the sequence is LNGQLVANGNGKTRKNSNSETMTNG. Low complexity predominate over residues 88 to 97; that stretch reads NYNNNNNNNN. The segment covering 98–108 has biased composition (polar residues); the sequence is SISATNGQYTN. The segment covering 109-118 has biased composition (low complexity); sequence SSSKTTSASA. A compositionally biased stretch (acidic residues) spans 164 to 178; the sequence is QDMEEDEPNGIEIDE. The span at 213 to 226 shows a compositional bias: polar residues; that stretch reads TTPSYAMPTSNSTP. The Protein kinase 1 domain maps to 261–530; sequence FKIIRVLGTG…ASEIKEHPFF (270 aa). ATP contacts are provided by residues 267-275 and K293; that span reads LGTGAYGRV. The active-site Proton acceptor is the D389. Residue S424 is modified to Phosphoserine. In terms of domain architecture, AGC-kinase C-terminal spans 531-599; that stretch reads NGINWQELRT…VAPEHLEQMR (69 aa). T588 carries the post-translational modification Phosphothreonine. The Protein kinase 2 domain maps to 623–886; sequence LELGTRTSNG…LSDILDSEWL (264 aa). ATP is bound by residues 629–637 and K652; that span reads TSNGAYGTC. D739 (proton acceptor) is an active-site residue. Residue T1045 is modified to Phosphothreonine. S1047 is modified (phosphoserine). The tract at residues 1168-1197 is disordered; sequence TFPRPKAQLKRTKREPKVPRPPTRVQPERA.

The protein belongs to the protein kinase superfamily. Ser/Thr protein kinase family. In terms of assembly, interacts with lola. Interacts with proteins of the male specific lethal (MSL) dosage compensation complex; this interaction is mediated by the kinase domains. Mg(2+) serves as cofactor. Autophosphorylated in vitro.

The protein resides in the nucleus. The protein localises to the chromosome. It carries out the reaction L-seryl-[protein] + ATP = O-phospho-L-seryl-[protein] + ADP + H(+). The enzyme catalyses L-threonyl-[protein] + ATP = O-phospho-L-threonyl-[protein] + ADP + H(+). Its function is as follows. Phosphorylates 'Ser-10' of histone H3. May regulate gene expression by establishing or maintaining the structure of more open chromatin regions. Also required for normal polytene chromosome structure, for oogenesis and for viability throughout development. Regulates the structure of polytene chromosomes in salivary glands. May phosphorylate 'Ser-1' of histone H2A. In Drosophila melanogaster (Fruit fly), this protein is Chromosomal serine/threonine-protein kinase JIL-1.